Consider the following 128-residue polypeptide: Large ribosomal subunit protein eL22 (128 aa).

At threonine 62 the chain carries Phosphothreonine. Position 66 is a phosphoserine (serine 66). Lysine 69 bears the N6-succinyllysine mark.

This sequence belongs to the eukaryotic ribosomal protein eL22 family. Component of the large ribosomal subunit.

It localises to the cytoplasm. In terms of biological role, component of the large ribosomal subunit. The ribosome is a large ribonucleoprotein complex responsible for the synthesis of proteins in the cell. In Oryctolagus cuniculus (Rabbit), this protein is Large ribosomal subunit protein eL22 (RPL22).